Consider the following 219-residue polypeptide: 2-hydroxy-3-keto-5-methylthiopentenyl-1-phosphate phosphatase (219 aa).

Belongs to the HAD-like hydrolase superfamily. MtnX family.

It carries out the reaction 2-hydroxy-5-methylsulfanyl-3-oxopent-1-enyl phosphate + H2O = 1,2-dihydroxy-5-(methylsulfanyl)pent-1-en-3-one + phosphate. The protein operates within amino-acid biosynthesis; L-methionine biosynthesis via salvage pathway; L-methionine from S-methyl-5-thio-alpha-D-ribose 1-phosphate: step 4/6. Its function is as follows. Dephosphorylates 2-hydroxy-3-keto-5-methylthiopentenyl-1-phosphate (HK-MTPenyl-1-P) yielding 1,2-dihydroxy-3-keto-5-methylthiopentene (DHK-MTPene). The protein is 2-hydroxy-3-keto-5-methylthiopentenyl-1-phosphate phosphatase of Bacillus cereus (strain ATCC 10987 / NRS 248).